A 229-amino-acid polypeptide reads, in one-letter code: Flagellar L-ring protein 1 (229 aa).

The N-terminal stretch at 1-18 (MYLRKISAPLMTMLLLNG) is a signal peptide. Residue Cys19 is the site of N-palmitoyl cysteine attachment. A lipid anchor (S-diacylglycerol cysteine) is attached at Cys19.

It belongs to the FlgH family. The basal body constitutes a major portion of the flagellar organelle and consists of four rings (L,P,S, and M) mounted on a central rod.

The protein resides in the cell outer membrane. It localises to the bacterial flagellum basal body. Its function is as follows. Assembles around the rod to form the L-ring and probably protects the motor/basal body from shearing forces during rotation. This Yersinia pseudotuberculosis serotype I (strain IP32953) protein is Flagellar L-ring protein 1 (flgH1).